Here is a 96-residue protein sequence, read N- to C-terminus: Small ribosomal subunit protein bS16m (96 aa).

This sequence belongs to the bacterial ribosomal protein bS16 family. In terms of assembly, component of the mitochondrial small ribosomal subunit (mt-SSU). Mature yeast 74S mitochondrial ribosomes consist of a small (37S) and a large (54S) subunit. The 37S small subunit contains a 15S ribosomal RNA (15S mt-rRNA) and at least 32 different proteins. The 54S large subunit contains a 21S rRNA (21S mt-rRNA) and at least 45 different proteins.

The protein localises to the mitochondrion. In terms of biological role, component of the mitochondrial ribosome (mitoribosome), a dedicated translation machinery responsible for the synthesis of mitochondrial genome-encoded proteins, including at least some of the essential transmembrane subunits of the mitochondrial respiratory chain. The mitoribosomes are attached to the mitochondrial inner membrane and translation products are cotranslationally integrated into the membrane. The chain is Small ribosomal subunit protein bS16m (mrps16) from Schizosaccharomyces pombe (strain 972 / ATCC 24843) (Fission yeast).